We begin with the raw amino-acid sequence, 232 residues long: Enolase-phosphatase E1 (232 aa).

Belongs to the HAD-like hydrolase superfamily. MasA/MtnC family. In terms of assembly, monomer. It depends on Mg(2+) as a cofactor.

It catalyses the reaction 5-methylsulfanyl-2,3-dioxopentyl phosphate + H2O = 1,2-dihydroxy-5-(methylsulfanyl)pent-1-en-3-one + phosphate. The protein operates within amino-acid biosynthesis; L-methionine biosynthesis via salvage pathway; L-methionine from S-methyl-5-thio-alpha-D-ribose 1-phosphate: step 3/6. Its pathway is amino-acid biosynthesis; L-methionine biosynthesis via salvage pathway; L-methionine from S-methyl-5-thio-alpha-D-ribose 1-phosphate: step 4/6. Functionally, bifunctional enzyme that catalyzes the enolization of 2,3-diketo-5-methylthiopentyl-1-phosphate (DK-MTP-1-P) into the intermediate 2-hydroxy-3-keto-5-methylthiopentenyl-1-phosphate (HK-MTPenyl-1-P), which is then dephosphorylated to form the acireductone 1,2-dihydroxy-3-keto-5-methylthiopentene (DHK-MTPene). This chain is Enolase-phosphatase E1, found in Xanthomonas euvesicatoria pv. vesicatoria (strain 85-10) (Xanthomonas campestris pv. vesicatoria).